We begin with the raw amino-acid sequence, 533 residues long: E3 ubiquitin-protein ligase arih1l (533 aa).

Disordered regions lie at residues 1-35 (MDSD…EAVD) and 48-73 (PAVA…QEDE). The interval 158–369 (QDLPCQICYL…SAWYNCNRYN (212 aa)) is TRIAD supradomain. Positions 162, 165, 179, 181, 184, 187, 207, 212, 252, 257, 273, 275, 280, 283, 288, 293, 320, and 323 each coordinate Zn(2+). Residues 162-212 (CQICYLNYPNSYFTGLECGHKFCMQCWGDYLTTKIIEEGMGQTISCPAHNC) form an RING-type 1 zinc finger. The segment at 232–293 (LKYQHLITNS…GENWHDPVKC (62 aa)) adopts an IBR-type zinc-finger fold. The RING-type 2; atypical zinc finger occupies 320–351 (CPKCHVTIEKDGGCNHMVCRNQNCKAEFCWVC). Cys333 is a catalytic residue. The Zn(2+) site is built by Cys338, Cys343, Cys348, Cys351, His358, and Cys365. A coiled-coil region spans residues 409 to 425 (KLYAQVKQKMEEMQQHN).

This sequence belongs to the RBR family. Ariadne subfamily.

The protein localises to the cytoplasm. It carries out the reaction [E2 ubiquitin-conjugating enzyme]-S-ubiquitinyl-L-cysteine + [acceptor protein]-L-lysine = [E2 ubiquitin-conjugating enzyme]-L-cysteine + [acceptor protein]-N(6)-ubiquitinyl-L-lysine.. It participates in protein modification; protein ubiquitination. Its function is as follows. E3 ubiquitin-protein ligase, which catalyzes polyubiquitination of target proteins together with ubiquitin-conjugating enzyme E2 ube2l3. This is E3 ubiquitin-protein ligase arih1l (arih1l) from Danio rerio (Zebrafish).